Reading from the N-terminus, the 844-residue chain is Striatin-interacting proteins 2 (844 aa).

The span at 1–18 shows a compositional bias: low complexity; the sequence is MDDPAAPGPAGSPANDNG. Positions 1–58 are disordered; the sequence is MDDPAAPGPAGSPANDNGNGNGNGNGNGNGGKGKPAVPKGRETFRNQRRESEGSVDCP. Over residues 19–33 the composition is skewed to gly residues; that stretch reads NGNGNGNGNGNGGKG. A compositionally biased stretch (basic and acidic residues) spans 39–52; the sequence is KGRETFRNQRRESE. S328, S339, and S364 each carry phosphoserine. The tract at residues 331-355 is disordered; that stretch reads SYTLDLGESQLAPPPSKLRGRRGSR. The tract at residues 370–422 is disordered; that stretch reads ERDLFKTEEPATEEEEESAADGERTLDGELDLLEQDPLVPPPPSQTPLSTDRV. A compositionally biased stretch (acidic residues) spans 379–389; it reads PATEEEEESAA.

Belongs to the STRIP family. In terms of assembly, part of the core of STRIPAK complexes composed of PP2A catalytic and scaffolding subunits, the striatins (PP2A regulatory subunits), the striatin-associated proteins MOB4, STRIP1 and STRIP2, PDCD10 and members of the STE20 kinases, such as STK24 and STK26. Interacts with CTTNBP2NL.

The protein localises to the cytoplasm. In terms of biological role, plays a role in the regulation of cell morphology and cytoskeletal organization. Required in the control of cell shape. Calmodulin-binding scaffolding protein which is the center of the striatin-interacting phosphatase and kinase (STRIPAK) complexes. STRIPAK complexes have critical roles in protein (de)phosphorylation and are regulators of multiple signaling pathways including Hippo, MAPK, nuclear receptor and cytoskeleton remodeling. Different types of STRIPAK complexes are involved in a variety of biological processes such as cell growth, differentiation, apoptosis, metabolism and immune regulation. The polypeptide is Striatin-interacting proteins 2 (Strip2) (Mus musculus (Mouse)).